The primary structure comprises 381 residues: Guanine nucleotide-binding protein G(olf) subunit alpha (381 aa).

The tract at residues Met-1 to Asn-25 is disordered. A lipid anchor (N-palmitoyl glycine) is attached at Gly-2. Cys-3 carries S-palmitoyl cysteine lipidation. The span at Thr-10–Asn-25 shows a compositional bias: basic and acidic residues. The region spanning Ala-41 to Leu-381 is the G-alpha domain. Positions Arg-44–Thr-57 are G1 motif. GTP contacts are provided by Glu-52, Ser-53, Gly-54, Lys-55, Ser-56, and Thr-57. Position 56 (Ser-56) interacts with Mg(2+). A Phosphothreonine modification is found at Thr-178. The segment at Asp-183–Thr-191 is G2 motif. GTP-binding residues include Leu-185, Arg-186, and Thr-191. Residues Thr-191 and Asp-210 each contribute to the Mg(2+) site. The G3 motif stretch occupies residues Phe-206–Arg-215. 5 residues coordinate GTP: Gly-213, Asn-279, Lys-280, Asp-282, and Ala-353. Residues Ile-275–Asp-282 form a G4 motif region. Residues Thr-351–Thr-356 are G5 motif.

This sequence belongs to the G-alpha family. G(s) subfamily. G proteins are composed of 3 units; alpha, beta and gamma. The alpha chain contains the guanine nucleotide binding site. Interacts with GAS2L2. Interacts (GDP-bound form) with RIC8B (via C-terminus); promoting GNAL folding and association with the plasma membrane.

It localises to the cell membrane. It carries out the reaction GTP + H2O = GDP + phosphate + H(+). In terms of biological role, guanine nucleotide-binding protein (G protein) involved as transducer in olfactory signal transduction controlled by G protein-coupled receptors (GPCRs). Contains the guanine nucleotide binding site and alternates between an active, GTP-bound state and an inactive, GDP-bound state. Signaling by an activated GPCR promotes GDP release and GTP binding. The alpha subunit has a low GTPase activity that converts bound GTP to GDP, thereby terminating the signal. Both GDP release and GTP hydrolysis are modulated by numerous regulatory proteins. GNAL/G(olf) alpha specifically mediates olfactory signal transduction within the olfactory neuroepithelium and the basal ganglia following GPCRs activation. Acts by promoting the specific activation of adenylyl cyclase ADCY3, resulting in increased levels of the signaling molecule cAMP. The polypeptide is Guanine nucleotide-binding protein G(olf) subunit alpha (Rattus norvegicus (Rat)).